The chain runs to 441 residues: tRNA pseudouridine synthase Pus10 (441 aa).

D268 acts as the Nucleophile in catalysis. 2 residues coordinate substrate: Y333 and Y405.

The protein belongs to the pseudouridine synthase Pus10 family.

It carries out the reaction uridine(54) in tRNA = pseudouridine(54) in tRNA. The enzyme catalyses uridine(55) in tRNA = pseudouridine(55) in tRNA. Responsible for synthesis of pseudouridine from uracil-54 and uracil-55 in the psi GC loop of transfer RNAs. The sequence is that of tRNA pseudouridine synthase Pus10 from Thermosphaera aggregans (strain DSM 11486 / M11TL).